A 1061-amino-acid chain; its full sequence is RecBCD enzyme subunit RecC (1061 aa).

It belongs to the RecC family. As to quaternary structure, heterotrimer of RecB, RecC and RecD. All subunits contribute to DNA-binding.

Functionally, a helicase/nuclease that prepares dsDNA breaks (DSB) for recombinational DNA repair. Binds to DSBs and unwinds DNA via a highly rapid and processive ATP-dependent bidirectional helicase activity. Unwinds dsDNA until it encounters a Chi (crossover hotspot instigator) sequence from the 3' direction. Cuts ssDNA a few nucleotides 3' to the Chi site. The properties and activities of the enzyme are changed at Chi. The Chi-altered holoenzyme produces a long 3'-ssDNA overhang and facilitates RecA-binding to the ssDNA for homologous DNA recombination and repair. Holoenzyme degrades any linearized DNA that is unable to undergo homologous recombination. In the holoenzyme this subunit recognizes the wild-type Chi sequence, and when added to isolated RecB increases its ATP-dependent helicase processivity. This is RecBCD enzyme subunit RecC from Buchnera aphidicola subsp. Schizaphis graminum (strain Sg).